The chain runs to 58 residues: Large ribosomal subunit protein eL37 (58 aa).

Over residues 1 to 17 (MTGAGTPSQGKKNTTTH) the composition is skewed to polar residues. Residues 1-26 (MTGAGTPSQGKKNTTTHTKCRRCGEK) form a disordered region. Zn(2+)-binding residues include cysteine 20, cysteine 23, cysteine 35, and cysteine 38. The segment at 20 to 38 (CRRCGEKSYHTKKKVCSSC) adopts a C4-type zinc-finger fold.

Belongs to the eukaryotic ribosomal protein eL37 family. It depends on Zn(2+) as a cofactor.

Binds to the 23S rRNA. The chain is Large ribosomal subunit protein eL37 from Halobacterium salinarum (strain ATCC 29341 / DSM 671 / R1).